An 818-amino-acid polypeptide reads, in one-letter code: Serine/threonine-protein phosphatase 4 regulatory subunit 3 (818 aa).

One can recognise a WH1 domain in the interval 1-100; the sequence is MTDTRRRVKV…DEIWEKICQV (100 aa). Residues 670–681 show a composition bias toward acidic residues; that stretch reads FNTDEEDLEDGE. The segment at 670–818 is disordered; that stretch reads FNTDEEDLED…PLSKKSKLSS (149 aa). Basic and acidic residues predominate over residues 703–718; sequence FMERKKLKDSEEKEVL. The span at 729-775 shows a compositional bias: low complexity; the sequence is SPSFKLSFSSSPKASLSSPPTASLHPGSPGSPSSPGTGARSSPPSAA. Phosphoserine occurs at positions 769 and 770. The span at 788-803 shows a compositional bias: acidic residues; the sequence is YPDDDEEDEDEEDADS.

This sequence belongs to the SMEK family. As to quaternary structure, serine/threonine-protein phosphatase 4 (PP4) occurs in different assemblies of the catalytic and one or more regulatory subunits.

Regulatory subunit of serine/threonine-protein phosphatase 4. The chain is Serine/threonine-protein phosphatase 4 regulatory subunit 3 (smek1) from Danio rerio (Zebrafish).